Here is a 105-residue protein sequence, read N- to C-terminus: MKTVGLYLLTALAEILGCYLPYLWLRQGASPWVLLPGAASLAVFAWLLTLHPDASGRVYAAYGGVYIAMAIAWLWAVDGVRPSPWDIAGVAVALGGMAIIVFQPR.

The next 4 helical transmembrane spans lie at 4-24 (VGLY…PYLW), 28-48 (GASP…AWLL), 60-80 (AAYG…VDGV), and 82-102 (PSPW…IIVF).

The protein belongs to the UPF0060 family.

The protein localises to the cell inner membrane. The chain is UPF0060 membrane protein Rmet_4032 from Cupriavidus metallidurans (strain ATCC 43123 / DSM 2839 / NBRC 102507 / CH34) (Ralstonia metallidurans).